A 370-amino-acid polypeptide reads, in one-letter code: 4-hydroxy-3-methylbut-2-en-1-yl diphosphate synthase (flavodoxin) (370 aa).

[4Fe-4S] cluster contacts are provided by C270, C273, C305, and E312.

The protein belongs to the IspG family. [4Fe-4S] cluster serves as cofactor.

The catalysed reaction is (2E)-4-hydroxy-3-methylbut-2-enyl diphosphate + oxidized [flavodoxin] + H2O + 2 H(+) = 2-C-methyl-D-erythritol 2,4-cyclic diphosphate + reduced [flavodoxin]. It functions in the pathway isoprenoid biosynthesis; isopentenyl diphosphate biosynthesis via DXP pathway; isopentenyl diphosphate from 1-deoxy-D-xylulose 5-phosphate: step 5/6. Its function is as follows. Converts 2C-methyl-D-erythritol 2,4-cyclodiphosphate (ME-2,4cPP) into 1-hydroxy-2-methyl-2-(E)-butenyl 4-diphosphate. This is 4-hydroxy-3-methylbut-2-en-1-yl diphosphate synthase (flavodoxin) from Ectopseudomonas mendocina (strain ymp) (Pseudomonas mendocina).